The following is a 406-amino-acid chain: Paracaspase (406 aa).

A caspase-like region spans residues 193-374; it reads IGNSKYSQHR…TERKNNNIST (182 aa). Residues histidine 266 and cysteine 311 contribute to the active site.

This sequence belongs to the peptidase C14B family.

Not required for DIF-induced autophagic cell death and necrotic cell death. This Dictyostelium discoideum (Social amoeba) protein is Paracaspase (pcp).